The primary structure comprises 365 residues: Pituitary-specific positive transcription factor 1 (365 aa).

A 9aaTAD motif is present at residues 5-12 (AFSADSFT). The tract at residues 160 to 191 (PAVLSEEPPLGGTKDLRLRSRPPDDPPDMDSP) is disordered. Basic and acidic residues predominate over residues 173-183 (KDLRLRSRPPD). Positions 188 to 262 (MDSPQIRELE…ILAKWLDEAE (75 aa)) constitute a POU-specific domain. Positions 278–337 (KRKRRTTISLGAKEALERSFREKIKPSSQEIVRMAEGLHLEKEVVRVWFCNRRQREKRVK) form a DNA-binding region, homeobox.

Belongs to the POU transcription factor family. Class-1 subfamily.

It is found in the nucleus. In terms of biological role, transcription factor that activates growth hormone and prolactin genes. Specifically binds to the consensus sequence 5'-TAAAT-3'. This Oncorhynchus keta (Chum salmon) protein is Pituitary-specific positive transcription factor 1 (pou1f1).